We begin with the raw amino-acid sequence, 436 residues long: Glutamate-1-semialdehyde 2,1-aminomutase (436 aa).

K269 bears the N6-(pyridoxal phosphate)lysine mark.

Belongs to the class-III pyridoxal-phosphate-dependent aminotransferase family. HemL subfamily. As to quaternary structure, homodimer. Pyridoxal 5'-phosphate is required as a cofactor.

The protein localises to the cytoplasm. It catalyses the reaction (S)-4-amino-5-oxopentanoate = 5-aminolevulinate. It functions in the pathway porphyrin-containing compound metabolism; protoporphyrin-IX biosynthesis; 5-aminolevulinate from L-glutamyl-tRNA(Glu): step 2/2. Its pathway is porphyrin-containing compound metabolism; chlorophyll biosynthesis. In Heliobacterium modesticaldum (strain ATCC 51547 / Ice1), this protein is Glutamate-1-semialdehyde 2,1-aminomutase.